The chain runs to 185 residues: ATP synthase subunit b, chloroplastic (185 aa).

The chain crosses the membrane as a helical span at residues 31 to 49 (LINSGVVLGLPVYSGKGVL).

The protein belongs to the ATPase B chain family. In terms of assembly, F-type ATPases have 2 components, F(1) - the catalytic core - and F(0) - the membrane proton channel. F(1) has five subunits: alpha(3), beta(3), gamma(1), delta(1), epsilon(1). F(0) has four main subunits: a(1), b(1), b'(1) and c(10-14). The alpha and beta chains form an alternating ring which encloses part of the gamma chain. F(1) is attached to F(0) by a central stalk formed by the gamma and epsilon chains, while a peripheral stalk is formed by the delta, b and b' chains.

The protein resides in the plastid. It is found in the chloroplast thylakoid membrane. Functionally, f(1)F(0) ATP synthase produces ATP from ADP in the presence of a proton or sodium gradient. F-type ATPases consist of two structural domains, F(1) containing the extramembraneous catalytic core and F(0) containing the membrane proton channel, linked together by a central stalk and a peripheral stalk. During catalysis, ATP synthesis in the catalytic domain of F(1) is coupled via a rotary mechanism of the central stalk subunits to proton translocation. Component of the F(0) channel, it forms part of the peripheral stalk, linking F(1) to F(0). This is ATP synthase subunit b, chloroplastic from Huperzia lucidula (Shining clubmoss).